Consider the following 220-residue polypeptide: GTP cyclohydrolase 1 (220 aa).

3 residues coordinate Zn(2+): Cys-110, His-113, and Cys-181.

The protein belongs to the GTP cyclohydrolase I family. As to quaternary structure, toroid-shaped homodecamer, composed of two pentamers of five dimers.

It carries out the reaction GTP + H2O = 7,8-dihydroneopterin 3'-triphosphate + formate + H(+). Its pathway is cofactor biosynthesis; 7,8-dihydroneopterin triphosphate biosynthesis; 7,8-dihydroneopterin triphosphate from GTP: step 1/1. The protein is GTP cyclohydrolase 1 of Baumannia cicadellinicola subsp. Homalodisca coagulata.